A 500-amino-acid chain; its full sequence is NAD(P)H-quinone oxidoreductase chain 4, chloroplastic (500 aa).

A run of 14 helical transmembrane segments spans residues 4–24 (FPWL…IFFL), 37–57 (MSIC…HFQL), 87–107 (LGSI…AWPV), 113–130 (LFYF…GLFS), 134–154 (LLLF…LLSM), 167–187 (FILY…GMGL), 211–231 (ILFY…IPLH), 242–262 (HYST…YGLI), 272–292 (AHYL…IYAA), 313–333 (MGFI…GAIL), 334–354 (QILS…TACD), 386–406 (LALP…GLIT), 417–437 (LITF…LSML), and 462–482 (LFLL…PDFV).

Belongs to the complex I subunit 4 family.

The protein localises to the plastid. Its subcellular location is the chloroplast thylakoid membrane. It carries out the reaction a plastoquinone + NADH + (n+1) H(+)(in) = a plastoquinol + NAD(+) + n H(+)(out). The catalysed reaction is a plastoquinone + NADPH + (n+1) H(+)(in) = a plastoquinol + NADP(+) + n H(+)(out). The polypeptide is NAD(P)H-quinone oxidoreductase chain 4, chloroplastic (Oryza nivara (Indian wild rice)).